Reading from the N-terminus, the 518-residue chain is GRIN2-like protein (518 aa).

Disordered regions lie at residues 1 to 23 and 467 to 500; these read MGLE…QSRT and QTEP…FRTM. Residues 476–494 show a composition bias toward basic and acidic residues; that stretch reads KSDEDPLNKEPSSDKMEKK.

In terms of assembly, may interact with GNAO1.

In terms of biological role, may be involved in neurite outgrowth. The polypeptide is GRIN2-like protein (Gallus gallus (Chicken)).